The sequence spans 447 residues: MVARRFVVRQGGGGGGGGEAEEHEVEYDTEHGLDILRLQIFSLTSVPPELQKIVVEADGSVVDDGTDLEAISEGLRLVAITGEEEEAEAAAAAEAARAQEKSDEELARMIQAEEEALLLQQYSIRNDGGEEFRERVEPYMHQVLMYEDPMRQEAARKTVPMDELQEKALVSLAKEGNFSPSKDEEDHAFLLQLLFWFKQSFRWVNAPPCDSCGRETFNVGMGTALPSEIKFGANRVEIYRCNYCSSTTRFPRYNDPYKLLETRKGRCGEWANCFTFYCRSFGYEARLILDFTDHVWTECFSNLYGRWMHLDPCEGVYDNPLLYEKGWNKKLDYVIAISKDGVRDVTKRYTRKWHEVLSRRIITSEDTVSAILSSITGKYRSGLSIDGLTALENRDKKESEELSKAAYLEVDTSISLPGRQSGSVEWRKASQKCSTYILSITSGNGCG.

Zn(2+)-binding residues include Cys-209, Cys-212, Cys-241, and Cys-244. Cys-267 serves as the catalytic Nucleophile. Catalysis depends on residues His-294 and Asp-311.

This sequence belongs to the transglutaminase-like superfamily. PNGase family. The cofactor is Zn(2+).

The protein localises to the cytoplasm. The enzyme catalyses Hydrolysis of an N(4)-(acetyl-beta-D-glucosaminyl)asparagine residue in which the glucosamine residue may be further glycosylated, to yield a (substituted) N-acetyl-beta-D-glucosaminylamine and a peptide containing an aspartate residue.. Functionally, specifically deglycosylates the denatured form of N-linked glycoproteins in the cytoplasm and assists their proteasome-mediated degradation. Cleaves the beta-aspartyl-glucosamine (GlcNAc) of the glycan and the amide side chain of Asn, converting Asn to Asp. Prefers proteins containing high-mannose over those bearing complex type oligosaccharides. Can recognize misfolded proteins in the endoplasmic reticulum that are exported to the cytosol to be destroyed and deglycosylate them, while it has no activity toward native proteins. Deglycosylation is a prerequisite for subsequent proteasome-mediated degradation of some, but not all, misfolded glycoproteins. The polypeptide is Peptide-N(4)-(N-acetyl-beta-glucosaminyl)asparagine amidase (PNG1) (Oryza sativa subsp. japonica (Rice)).